The following is a 40-amino-acid chain: Photosystem II reaction center protein Psb30 (40 aa).

The chain crosses the membrane as a helical span at residues 12-32; the sequence is VIFQLTSVALIIIAGPAVIFV.

This sequence belongs to the Psb30/Ycf12 family. In terms of assembly, PSII is composed of 1 copy each of membrane proteins PsbA, PsbB, PsbC, PsbD, PsbE, PsbF, PsbH, PsbI, PsbJ, PsbK, PsbL, PsbM, PsbT, PsbX, PsbY, PsbZ, Psb30/Ycf12, peripheral proteins PsbO, CyanoQ (PsbQ), PsbU, PsbV and a large number of cofactors. It forms dimeric complexes.

The protein localises to the cellular thylakoid membrane. Its function is as follows. A core subunit of photosystem II (PSII), probably helps stabilize the reaction center. This chain is Photosystem II reaction center protein Psb30, found in Nostoc sp. (strain PCC 7120 / SAG 25.82 / UTEX 2576).